The sequence spans 324 residues: Signal peptidase I (324 aa).

Methionine 1 is subject to Blocked amino end (Met). The Periplasmic segment spans residues methionine 1–asparagine 3. A helical transmembrane segment spans residues methionine 4 to valine 22. Residues aspartate 23–proline 58 lie on the Cytoplasmic side of the membrane. A helical membrane pass occupies residues glycine 59–valine 77. Residues arginine 78–histidine 324 are Periplasmic-facing. Active-site residues include serine 91 and lysine 146. A disulfide bridge connects residues cysteine 171 and cysteine 177.

It belongs to the peptidase S26 family.

The protein resides in the cell inner membrane. It catalyses the reaction Cleavage of hydrophobic, N-terminal signal or leader sequences from secreted and periplasmic proteins.. This Escherichia coli (strain K12) protein is Signal peptidase I (lepB).